A 590-amino-acid chain; its full sequence is Ankyrin repeat domain-containing protein 13A (590 aa).

ANK repeat units lie at residues 40-69 (RGRT…DVTK) and 73-102 (QGWT…YHNT). Ser-205 carries the phosphoserine modification. 4 consecutive UIM domains span residues 483 to 502 (EDYE…SSRS), 519 to 538 (TYDA…STEG), 549 to 568 (RFDN…LEEW), and 574 to 590 (EEEA…LTDK). Phosphoserine is present on Ser-586.

In terms of assembly, interacts (via the UIM 3 and 4 repeats) with EGFR (ubiquitinated); the interaction is direct, inhibited by ANKRD13A monoubiquitination and may regulate EGFR internalization. In terms of processing, monoubiquitinated, inhibits interaction with ubiquitinated EGFR.

It localises to the cell membrane. Its subcellular location is the late endosome. Ubiquitin-binding protein that specifically recognizes and binds 'Lys-63'-linked ubiquitin. Does not bind 'Lys-48'-linked ubiquitin. Positively regulates the internalization of ligand-activated EGFR by binding to the Ub moiety of ubiquitinated EGFR at the cell membrane. The sequence is that of Ankyrin repeat domain-containing protein 13A (ANKRD13A) from Homo sapiens (Human).